We begin with the raw amino-acid sequence, 871 residues long: Transient receptor potential cation channel subfamily V member 4 (871 aa).

Positions methionine 1 to arginine 68 are disordered. Residues methionine 1–valine 469 lie on the Cytoplasmic side of the membrane. Tyrosine 110 carries the post-translational modification Phosphotyrosine. Residues lysine 192, lysine 197, asparagine 201, tyrosine 236–glutamine 239, and arginine 248 each bind ATP. ANK repeat units follow at residues arginine 237–alanine 266 and phenylalanine 284–aspartate 313. Residue arginine 249 to lysine 251 participates in a 1,2-diacyl-sn-glycero-3-phospho-(1D-myo-inositol-4,5-bisphosphate) binding. Tyrosine 253 carries the post-translational modification Phosphotyrosine. A 1,2-diacyl-sn-glycero-3-phospho-(1D-myo-inositol-4,5-bisphosphate) is bound by residues asparagine 296–histidine 299 and lysine 344. The ANK 3 repeat unit spans residues aspartate 369–aspartate 398. A helical transmembrane segment spans residues serine 470–tyrosine 490. Over tyrosine 491–aspartate 507 the chain is Extracellular. Residues tyrosine 508–methionine 534 traverse the membrane as a helical segment. Residues lysine 535–glycine 547 are Cytoplasmic-facing. Residues serine 548 to leucine 568 form a helical membrane-spanning segment. Residues alanine 569 to glutamate 572 lie on the Extracellular side of the membrane. The chain crosses the membrane as a helical span at residues alanine 573–threonine 593. The Cytoplasmic segment spans residues arginine 594–lysine 608. A helical transmembrane segment spans residues isoleucine 609–leucine 636. Over asparagine 637–threonine 665 the chain is Extracellular. Positions phenylalanine 666–methionine 685 form an intramembrane region, pore-forming. Positions glycine 679–aspartate 682 match the Selectivity filter motif. Aspartate 682 contacts Ca(2+). Over leucine 686–valine 693 the chain is Extracellular. A helical membrane pass occupies residues valine 694–valine 722. The Cytoplasmic portion of the chain corresponds to glycine 723–leucine 871. Tyrosine 805 is modified (phosphotyrosine). An interaction with calmodulin and ITPR3 region spans residues histidine 812–glutamate 831. Phosphoserine is present on serine 824. The disordered stretch occupies residues glycine 849 to leucine 871.

This sequence belongs to the transient receptor (TC 1.A.4) family. TrpV subfamily. TRPV4 sub-subfamily. Homotetramer. Self-associates in an isoform-specific manner. Isoform 1 and isoform 5 can oligomerize, but isoform 2, isoform 4 and isoform 6 cannot oligomerize. Interacts with calmodulin. Interacts with Map7 and Src family Tyr protein kinases LYN, SRC, FYN, HCK, LCK and YES. Interacts with CTNNB1. The TRPV4 and CTNNB1 complex can interact with CDH1. Interacts with PACSIN1, PACSIN2 and PACSIN3 (via SH3 domain). Part of a complex containing MLC1, AQP4, HEPACAM and ATP1B1. Interacts with ITPR3. Interacts with AQP5; the interaction is probably indirect and regulates TRPV4 activation by hypotonicity. Interacts with ANO1. Interacts (via C-terminus) with PKD2 (via C-terminus). Interacts with DDX3X; this interaction is decreased when the channel is activated. Post-translationally, N-glycosylated. As to expression, found in the synoviocytes from patients with (RA) and without (CTR) rheumatoid arthritis (at protein level).

It is found in the cell membrane. It localises to the apical cell membrane. The protein localises to the cell junction. The protein resides in the adherens junction. Its subcellular location is the cell projection. It is found in the cilium. It localises to the endoplasmic reticulum. It catalyses the reaction Ca(2+)(in) = Ca(2+)(out). Its activity is regulated as follows. Channel activation is inhibited by binding to phosphatidylinositol-4,5-bisphosphate, and to a much lesser degree by phosphatidylinositol-3,4,5-trisphosphate. Not inhibited by phosphatidylinositol-3,4-bisphosphate and phosphatidylinositol-3,5-bisphosphate. Functionally, non-selective calcium permeant cation channel involved in osmotic sensitivity and mechanosensitivity. Activation by exposure to hypotonicity within the physiological range exhibits an outward rectification. Also activated by heat, low pH, citrate and phorbol esters. Increase of intracellular Ca(2+) potentiates currents. Channel activity seems to be regulated by a calmodulin-dependent mechanism with a negative feedback mechanism. Promotes cell-cell junction formation in skin keratinocytes and plays an important role in the formation and/or maintenance of functional intercellular barriers. Acts as a regulator of intracellular Ca(2+) in synoviocytes. Plays an obligatory role as a molecular component in the nonselective cation channel activation induced by 4-alpha-phorbol 12,13-didecanoate and hypotonic stimulation in synoviocytes and also regulates production of IL-8. Together with PKD2, forms mechano- and thermosensitive channels in cilium. Negatively regulates expression of PPARGC1A, UCP1, oxidative metabolism and respiration in adipocytes. Regulates expression of chemokines and cytokines related to pro-inflammatory pathway in adipocytes. Together with AQP5, controls regulatory volume decrease in salivary epithelial cells. Required for normal development and maintenance of bone and cartilage. In its inactive state, may sequester DDX3X at the plasma membrane. When activated, the interaction between both proteins is affected and DDX3X relocalizes to the nucleus. In neurons of the central nervous system, could play a role in triggering voluntary water intake in response to increased sodium concentration in body fluid. Its function is as follows. Non-selective calcium permeant cation channel involved in osmotic sensitivity and mechanosensitivity. Activation by exposure to hypotonicity within the physiological range exhibits an outward rectification. Also activated by phorbol esters. Has the same channel activity as isoform 1, and is activated by the same stimuli. In terms of biological role, lacks channel activity, due to impaired oligomerization and intracellular retention. (Microbial infection) Facilitates hepatitis C virus (HCV) replication, possibly through its action on DDX3X. Functionally, (Microbial infection) Facilitates Dengue virus (DENV) replication, possibly through its action on DDX3X. Its function is as follows. (Microbial infection) Facilitates Zika virus (ZIKV) replication, possibly through its action on DDX3X. This is Transient receptor potential cation channel subfamily V member 4 (TRPV4) from Homo sapiens (Human).